Reading from the N-terminus, the 446-residue chain is StAR-related lipid transfer protein 3 (446 aa).

At 1-52 (MSKRPGDLACDLERSLPALASLGTSLSHSQSLSSHFIPPPLEKRRAISDVRR) the chain is on the cytoplasmic side. The MENTAL domain maps to 47-218 (ISDVRRTFCL…YSPPESFAGS (172 aa)). Residues 53–73 (TFCLFVTFDLLFISLLWIIEL) traverse the membrane as a helical segment. The Extracellular portion of the chain corresponds to 74 to 95 (NTNTGIRKNLEQEVIHYSFQSS). The helical transmembrane segment at 96–116 (FFDIFVLAFFRFSGLLLGYAV) threads the bilayer. The Cytoplasmic portion of the chain corresponds to 117–121 (LRLQH). A helical transmembrane segment spans residues 122 to 142 (WWVIAVTTLVSSAFLIVKVIL). Residues 143–149 (SELLSKG) lie on the Extracellular side of the membrane. A helical membrane pass occupies residues 150-170 (AFGYLLPIVSFVLAWLETWFL). Over 171–446 (DFKVLPQEAE…QRVGELGARA (276 aa)) the chain is Cytoplasmic. The FFAT signature appears at 207 to 213 (QFYSPPE). Serine 210, serine 218, and serine 222 each carry phosphoserine. The 214-residue stretch at 231–444 (SFSAQEREYI…LRQRVGELGA (214 aa)) folds into the START domain.

The protein belongs to the STARD3 family. As to quaternary structure, homodimer. Interacts (via the MENTAL domain) with STARD3NL. Interacts (via phosphorylated FFAT motif) with VAPA (via MSP domain). Interacts (via phosphorylated FFAT motif) with VAPB (via MSP domain). Interacts (via phosphorylated FFAT motif) with MOSPD2 (via MSP domain); this interaction allows enrichment of MOSPD2 around endosomes. In terms of processing, phosphorylation at Ser-210 is necessary and sufficient for the direct interaction of the phosphorylated FFAT motif with the MSP domain of MOSPD2, VAPA and VAPB and allows the tethering of two membranes that participates in the formation of ER-endosome contacts. Phosphorylation of the FFAT motif leads to conformation changes. Additional phosphorylations around the core FFAT motif (QFYSPPE) are not essential but strengthen the interaction with MOSPD2, VAPA and VAPB. Phosphorylation at Ser-210 of FFAT motif drives membrane tethering between the endoplasmic reticulum and late endosomes via interaction with VAPA and VAPB that in turn allows the efficient transport of sterol mediated by the START domain.

The protein resides in the late endosome membrane. The enzyme catalyses cholesterol(in) = cholesterol(out). Sterol-binding protein that mediates cholesterol transport from the endoplasmic reticulum to endosomes. The sterol transport mechanism is triggered by phosphorylation of FFAT motif that leads to membrane tethering between the endoplasmic reticulum and late endosomes via interaction with VAPA and VAPB. Acts as a lipid transfer protein that redirects sterol to the endosome at the expense of the cell membrane and favors membrane formation inside endosomes. May also mediate cholesterol transport between other membranes, such as mitochondria membrane or cell membrane. However, such results need additional experimental evidences; probably mainly mediates cholesterol transport from the endoplasmic reticulum to endosomes. Does not activate transcriptional cholesterol sensing. Able to bind other lipids, such as lutein, a xanthophyll carotenoids that form the macular pigment of the retina. This chain is StAR-related lipid transfer protein 3, found in Mus musculus (Mouse).